Here is a 186-residue protein sequence, read N- to C-terminus: ATP synthase subunit delta (186 aa).

This sequence belongs to the ATPase delta chain family. F-type ATPases have 2 components, F(1) - the catalytic core - and F(0) - the membrane proton channel. F(1) has five subunits: alpha(3), beta(3), gamma(1), delta(1), epsilon(1). F(0) has three main subunits: a(1), b(2) and c(10-14). The alpha and beta chains form an alternating ring which encloses part of the gamma chain. F(1) is attached to F(0) by a central stalk formed by the gamma and epsilon chains, while a peripheral stalk is formed by the delta and b chains.

It localises to the cellular chromatophore membrane. Its function is as follows. F(1)F(0) ATP synthase produces ATP from ADP in the presence of a proton or sodium gradient. F-type ATPases consist of two structural domains, F(1) containing the extramembraneous catalytic core and F(0) containing the membrane proton channel, linked together by a central stalk and a peripheral stalk. During catalysis, ATP synthesis in the catalytic domain of F(1) is coupled via a rotary mechanism of the central stalk subunits to proton translocation. This protein is part of the stalk that links CF(0) to CF(1). It either transmits conformational changes from CF(0) to CF(1) or is implicated in proton conduction. This Rhodobacter capsulatus (Rhodopseudomonas capsulata) protein is ATP synthase subunit delta.